A 125-amino-acid chain; its full sequence is Large ribosomal subunit protein eL31 (125 aa).

This sequence belongs to the eukaryotic ribosomal protein eL31 family. As to quaternary structure, component of the large ribosomal subunit.

The protein resides in the cytoplasm. Its function is as follows. Component of the large ribosomal subunit. The ribosome is a large ribonucleoprotein complex responsible for the synthesis of proteins in the cell. The polypeptide is Large ribosomal subunit protein eL31 (rpl31) (Xenopus laevis (African clawed frog)).